A 322-amino-acid polypeptide reads, in one-letter code: HPr kinase/phosphorylase (322 aa).

Active-site residues include H146 and K167. An ATP-binding site is contributed by 161–168 (GDSGLGKS). Residue S168 participates in Mg(2+) binding. Residue D185 is the Proton acceptor; for phosphorylation activity. Proton donor; for dephosphorylation activity of the active site. An important for the catalytic mechanism of both phosphorylation and dephosphorylation region spans residues 209–218 (LEVRGLGLLD). Position 210 (E210) interacts with Mg(2+). The active site involves R250. The interval 271-276 (QVAAGR) is important for the catalytic mechanism of dephosphorylation.

This sequence belongs to the HPrK/P family. Homohexamer. Requires Mg(2+) as cofactor.

The enzyme catalyses [HPr protein]-L-serine + ATP = [HPr protein]-O-phospho-L-serine + ADP + H(+). It carries out the reaction [HPr protein]-O-phospho-L-serine + phosphate + H(+) = [HPr protein]-L-serine + diphosphate. In terms of biological role, catalyzes the ATP- as well as the pyrophosphate-dependent phosphorylation of a specific serine residue in HPr, a phosphocarrier protein of the phosphoenolpyruvate-dependent sugar phosphotransferase system (PTS). HprK/P also catalyzes the pyrophosphate-producing, inorganic phosphate-dependent dephosphorylation (phosphorolysis) of seryl-phosphorylated HPr (P-Ser-HPr). The chain is HPr kinase/phosphorylase from Burkholderia cenocepacia (strain HI2424).